The following is a 396-amino-acid chain: Actin-related protein 6 (396 aa).

This sequence belongs to the actin family. ARP6 subfamily. As to quaternary structure, interacts with CBX1 and CBX3.

It is found in the cytoplasm. Its subcellular location is the cytoskeleton. It localises to the nucleus. The protein localises to the nucleolus. Required for formation and/or maintenance of the proper nucleolar structure and function. Plays a dual role in the regulation of ribosomal DNA (rDNA) transcription. In the presence of high glucose, it maintains active rDNA transcription through H2A.Z deposition and under glucose starvation, is required for the repression of rDNA transcription, and this function may be independent of H2A.Z. The protein is Actin-related protein 6 (ACTR6) of Gallus gallus (Chicken).